Consider the following 265-residue polypeptide: Early E4 31 kDa protein (265 aa).

This sequence belongs to the adenoviridae E4 30 to 34 kDa protein family. In terms of assembly, interacts with E1B-55k.

The protein resides in the host nucleus. It localises to the host cytoplasm. In terms of biological role, plays a major role to prevent cellular inhibition of viral genome replication by nuclear bodies. Assembles an SCF-like E3 ubiquitin ligase complex based on the cellular proteins ELOB, ELOC, CUL5 and RBX1, in cooperation with viral E1B-55K. This viral RING-type ligase ubiquitinates cellular substrates prior to proteasomal degradation: p53/TP53, LIG4, MRE11-RAD50-NBS1 (MRN) complex, ITGA3, DAXX and BLM. The sequence is that of Early E4 31 kDa protein from Canis lupus familiaris (Dog).